We begin with the raw amino-acid sequence, 760 residues long: ATP-dependent zinc metalloprotease FtsH (760 aa).

Topologically, residues 1-5 (MNRKN) are cytoplasmic. A helical transmembrane segment spans residues 6–26 (VTRTITAIAVVVLLGWSFFYF). The Extracellular segment spans residues 27–110 (SDDTRGYKPV…KVSTVVNQGS (84 aa)). A helical transmembrane segment spans residues 111-131 (ILGELLVYVLPLLLLVGLFVM). Topologically, residues 132–760 (FSRMQGGARM…EVSRTKPAHG (629 aa)) are cytoplasmic. 203 to 210 (GPPGTGKT) is an ATP binding site. Histidine 425 is a Zn(2+) binding site. Residue glutamate 426 is part of the active site. Residues histidine 429 and aspartate 501 each coordinate Zn(2+). The interval 616 to 760 (DFGGRIPSDK…EVSRTKPAHG (145 aa)) is disordered. The span at 650-669 (AFKAAIAQATQAAEAARSDA) shows a compositional bias: low complexity. Positions 740–750 (GSDESSAEQDD) are enriched in acidic residues.

In the central section; belongs to the AAA ATPase family. The protein in the C-terminal section; belongs to the peptidase M41 family. As to quaternary structure, homohexamer. It depends on Zn(2+) as a cofactor.

The protein localises to the cell membrane. In terms of biological role, acts as a processive, ATP-dependent zinc metallopeptidase for both cytoplasmic and membrane proteins. Plays a role in the quality control of integral membrane proteins. In Mycobacterium bovis (strain ATCC BAA-935 / AF2122/97), this protein is ATP-dependent zinc metalloprotease FtsH.